Here is a 265-residue protein sequence, read N- to C-terminus: Signal peptidase I (265 aa).

Residues 1-19 lie on the Cytoplasmic side of the membrane; the sequence is MQIDTKTNTNKTTAQEWKS. The helical transmembrane segment at 20-40 threads the bilayer; sequence FAFVVCIALLIRILIMEPFTV. The Periplasmic segment spans residues 41-265; sequence PTGSMKATIL…IFRNLYNTDE (225 aa). Catalysis depends on residues S44 and K107.

The protein belongs to the peptidase S26 family.

It is found in the cell inner membrane. The enzyme catalyses Cleavage of hydrophobic, N-terminal signal or leader sequences from secreted and periplasmic proteins.. The polypeptide is Signal peptidase I (lepB) (Rickettsia canadensis (strain McKiel)).